A 259-amino-acid chain; its full sequence is E3 ubiquitin-protein ligase RNF170 (259 aa).

The Lumenal segment spans residues 1-25 (MAKYQGEVQSLKLDDDSVIEGVSDQ). Residues 26–46 (VLVAVVVSLALIATLVYALFS) traverse the membrane as a helical segment. Residues 47 to 202 (RNAHQNIHPE…GGLFWMFRIR (156 aa)) lie on the Cytoplasmic side of the membrane. An RING-type zinc finger spans residues 88–131 (CPICLHQASLPVETNCGHLFCGTCIVAYWRYGSWLGAISCPICR). A helical transmembrane segment spans residues 203 to 223 (IILCLMGAFFYLISPLDFVPE). Residue A224 is a topological domain, lumenal. The helical transmembrane segment at 225 to 245 (LFGILGFLDDFFVIFLLLIYI) threads the bilayer. Topologically, residues 246–259 (SIMYREVITQRLNR) are cytoplasmic.

Constitutively associated with the ERLIN1/ERLIN 2 complex. Interacts with activated ITPR1.

It is found in the endoplasmic reticulum membrane. It carries out the reaction S-ubiquitinyl-[E2 ubiquitin-conjugating enzyme]-L-cysteine + [acceptor protein]-L-lysine = [E2 ubiquitin-conjugating enzyme]-L-cysteine + N(6)-ubiquitinyl-[acceptor protein]-L-lysine.. It functions in the pathway protein modification; protein ubiquitination. E3 ubiquitin-protein ligase. Plays an essential role in stimulus-induced inositol 1,4,5-trisphosphate receptor type 1 (ITPR1) ubiquitination and degradation via the endoplasmic reticulum-associated degradation (ERAD) pathway. Also involved in ITPR1 turnover in resting cells. Selectively inhibits the TLR3-triggered innate immune response by promoting the 'Lys-48'-linked polyubiquitination and degradation of TLR3. The protein is E3 ubiquitin-protein ligase RNF170 (RNF170) of Bos taurus (Bovine).